The sequence spans 549 residues: Glucose-6-phosphate isomerase (549 aa).

The active-site Proton donor is glutamate 355. Active-site residues include histidine 386 and lysine 514.

Belongs to the GPI family.

The protein localises to the cytoplasm. The enzyme catalyses alpha-D-glucose 6-phosphate = beta-D-fructose 6-phosphate. It functions in the pathway carbohydrate biosynthesis; gluconeogenesis. Its pathway is carbohydrate degradation; glycolysis; D-glyceraldehyde 3-phosphate and glycerone phosphate from D-glucose: step 2/4. Its function is as follows. Catalyzes the reversible isomerization of glucose-6-phosphate to fructose-6-phosphate. The sequence is that of Glucose-6-phosphate isomerase from Salmonella paratyphi A (strain AKU_12601).